The chain runs to 534 residues: Phenylalanine N-monooxygenase CYP79D16 (534 aa).

Residues 1–21 (MEANVGFLTLCLAITLVRFLM) form the signal peptide. Cysteine 472 contributes to the heme binding site. A glycan (N-linked (GlcNAc...) asparagine) is linked at asparagine 500.

The protein belongs to the cytochrome P450 family. Requires heme as cofactor. Expressed in seedlings.

It catalyses the reaction L-phenylalanine + 2 reduced [NADPH--hemoprotein reductase] + 2 O2 = (E)-phenylacetaldehyde oxime + 2 oxidized [NADPH--hemoprotein reductase] + CO2 + 3 H2O + 2 H(+). In terms of biological role, involved in L-phenylalanine-derived cyanogenic glycoside biosynthesis, including prunasin and amygdalin defensive agents. Catalyzes the conversion of L-phenylalanine (Phe) into phenylacetaldoxime (PAOx). Cannot use tyrosine (Tyr), tryptophan (Trp) and valine (Val) as substrates. The chain is Phenylalanine N-monooxygenase CYP79D16 from Prunus mume (Japanese apricot).